The chain runs to 208 residues: Cytochrome c oxidase assembly protein CtaG (208 aa).

The Cytoplasmic segment spans residues 1–19 (MSPPLPQAPQQPAPRRGLG). The helical; Signal-anchor for type II membrane protein transmembrane segment at 20-42 (HDTAVAAVCGLVVALMVGASFAA) threads the bilayer. At 43-208 (VPFYNWFCRT…SEPAPRKGNL (166 aa)) the chain is on the periplasmic side.

Belongs to the COX11/CtaG family.

The protein resides in the cell inner membrane. Its function is as follows. Exerts its effect at some terminal stage of cytochrome c oxidase synthesis, probably by being involved in the insertion of the copper B into subunit I. The protein is Cytochrome c oxidase assembly protein CtaG of Rhodopseudomonas palustris (strain TIE-1).